The primary structure comprises 919 residues: Puromycin-sensitive aminopeptidase (919 aa).

Residues Glu180 and 316–320 contribute to the substrate site; that span reads GAMEN. Position 352 (His352) interacts with Zn(2+). Residue Glu353 is the Proton acceptor of the active site. 2 residues coordinate Zn(2+): His356 and Glu375. 3'-nitrotyrosine is present on Tyr464. Positions 726-730 match the Nuclear localization signal motif; it reads RRRFK.

It belongs to the peptidase M1 family. In terms of assembly, monomer. Requires Zn(2+) as cofactor. In terms of tissue distribution, detected in liver, epithelium of renal tubules, epithelium of small and large intestine, gastric epithelial cells, and alveoli of the lung (at protein level).

It is found in the cytoplasm. The protein resides in the cytosol. It localises to the nucleus. It catalyses the reaction Release of an N-terminal amino acid, preferentially alanine, from a wide range of peptides, amides and arylamides.. With respect to regulation, strongly inhibited by bestatin, leuhistin, actinonin, amastatin, 1,10-phenanthroline, DFP, PCMBS, Zn(2+), Cd(2+), Co(2+), Cu(2+), Hg(2+), EDTA and puromycin. Not inhibited by PMSF, and only slightly inhibited by leupeptin and aprotinin. Activity is increased by Mg(2+) and Ca(2+). Aminopeptidase with broad substrate specificity for several peptides. Involved in proteolytic events essential for cell growth and viability. May act as regulator of neuropeptide activity. Plays a role in the antigen-processing pathway for MHC class I molecules. Involved in the N-terminal trimming of cytotoxic T-cell epitope precursors. Digests the poly-Q peptides found in many cellular proteins. Digests tau from normal brain more efficiently than tau from Alzheimer disease brain. The polypeptide is Puromycin-sensitive aminopeptidase (NPEPPS) (Homo sapiens (Human)).